The chain runs to 576 residues: Gamma-aminobutyric acid receptor subunit beta (576 aa).

Positions 1–29 are cleaved as a signal peptide; it reads MSDSMLYQTLQTCLPKSRLITLWLAFTLA. The Extracellular portion of the chain corresponds to 30–268; the sequence is MLIQEPRRHA…IQFVRSMGYY (239 aa). Asparagine 56 is a glycosylation site (N-linked (GlcNAc...) asparagine). Cysteine 183 and cysteine 197 are disulfide-bonded. Asparagine 251 is a glycosylation site (N-linked (GlcNAc...) asparagine). The next 3 membrane-spanning stretches (helical) occupy residues 269–289, 298–320, and 330–350; these read LIQIYIPSGLIVVISWVSFWL, VALGVTTVLTMTTLMSSTNAALP, and VYLGTCFVMVFASLLEYATVG. The Cytoplasmic segment spans residues 351-540; the sequence is YMAKRIQMRK…TPSDIDKYSR (190 aa). 2 disordered regions span residues 372–418 and 452–507; these read QKKQ…QTVS and HDPK…GDAE. The segment covering 398 to 412 has biased composition (basic residues); it reads HGHGHGHHSHGHPHV. A compositionally biased stretch (pro residues) spans 475–490; it reads PVGPHGPGPQGPPGGP. Residues 491–501 show a composition bias toward gly residues; it reads PAGGGGGGAPP. A helical transmembrane segment spans residues 541-561; sequence IVFPVCFVCFNLMYWIIYLHV.

Belongs to the ligand-gated ion channel (TC 1.A.9) family. Gamma-aminobutyric acid receptor (TC 1.A.9.5) subfamily. In terms of assembly, homomultimer.

The protein localises to the postsynaptic cell membrane. It is found in the cell membrane. Its function is as follows. GABA, an inhibitory neurotransmitter, mediates neuronal inhibition by binding to the GABA receptor and opening an integral chloride channel. The polypeptide is Gamma-aminobutyric acid receptor subunit beta (Musca domestica (House fly)).